We begin with the raw amino-acid sequence, 281 residues long: Homoserine kinase (281 aa).

83–93 (PVSSGLGSSAA) contributes to the ATP binding site.

This sequence belongs to the GHMP kinase family. Homoserine kinase subfamily.

The protein localises to the cytoplasm. It carries out the reaction L-homoserine + ATP = O-phospho-L-homoserine + ADP + H(+). It participates in amino-acid biosynthesis; L-threonine biosynthesis; L-threonine from L-aspartate: step 4/5. Functionally, catalyzes the ATP-dependent phosphorylation of L-homoserine to L-homoserine phosphate. In Thermotoga petrophila (strain ATCC BAA-488 / DSM 13995 / JCM 10881 / RKU-1), this protein is Homoserine kinase.